A 64-amino-acid polypeptide reads, in one-letter code: SPbeta prophage-derived uncharacterized protein YosJ (64 aa).

In Bacillus subtilis (strain 168), this protein is SPbeta prophage-derived uncharacterized protein YosJ (yosJ).